The sequence spans 469 residues: Glutamate--tRNA ligase (469 aa).

The short motif at P11–N21 is the 'HIGH' region element. Residues Q114 to P131 show a composition bias toward basic and acidic residues. The interval Q114 to P139 is disordered. The short motif at K243–R247 is the 'KMSKS' region element. K246 contributes to the ATP binding site.

Belongs to the class-I aminoacyl-tRNA synthetase family. Glutamate--tRNA ligase type 1 subfamily. Monomer.

It is found in the cytoplasm. The catalysed reaction is tRNA(Glu) + L-glutamate + ATP = L-glutamyl-tRNA(Glu) + AMP + diphosphate. Its function is as follows. Catalyzes the attachment of glutamate to tRNA(Glu) in a two-step reaction: glutamate is first activated by ATP to form Glu-AMP and then transferred to the acceptor end of tRNA(Glu). The sequence is that of Glutamate--tRNA ligase from Paraburkholderia phytofirmans (strain DSM 17436 / LMG 22146 / PsJN) (Burkholderia phytofirmans).